A 397-amino-acid chain; its full sequence is Gastric triacylglycerol lipase (397 aa).

The signal sequence occupies residues 1–19; it reads MWWLLVTVCFIHMSGNAFC. An N-linked (GlcNAc...) asparagine glycan is attached at Asn33. An AB hydrolase-1 domain is found at 77–376; the sequence is PVVFLQHGLL…PNYNHLDFIW (300 aa). Ser171 serves as the catalytic Nucleophile. Cys245 and Cys254 are joined by a disulfide. Residues Asn270 and Asn326 are each glycosylated (N-linked (GlcNAc...) asparagine). Catalysis depends on charge relay system residues Asp342 and His371.

Belongs to the AB hydrolase superfamily. Lipase family.

It is found in the secreted. The catalysed reaction is a triacylglycerol + H2O = a diacylglycerol + a fatty acid + H(+). The enzyme catalyses 1,2,3-tri-(9Z-octadecenoyl)-glycerol + H2O = 1,2-di-(9Z-octadecenoyl)-sn-glycerol + (9Z)-octadecenoate + H(+). It carries out the reaction 1,2,3-trioctanoylglycerol + H2O = 1,2-dioctanoyl-sn-glycerol + octanoate + H(+). Inhibited by diethylp-nitrophenyl phosphate but not inhibited by thiol reagents 5,5'-dithiobis(2-nitrobenzoic acid) or 4,4'-dithiopyridine. Functionally, catalyzes the hydrolysis of triacylglycerols to yield free fatty acids, diacylglycerol, monoacylglycerol, and glycerol. Shows a preferential hydrolysis at the sn-3 position of triacylglycerol. The protein is Gastric triacylglycerol lipase (LIPF) of Bos taurus (Bovine).